Reading from the N-terminus, the 87-residue chain is Small ribosomal subunit protein bS20 (87 aa).

Positions 1–26 are disordered; the sequence is MANIKSAKKRAVQSEKARKHNASRRS.

The protein belongs to the bacterial ribosomal protein bS20 family.

Binds directly to 16S ribosomal RNA. The protein is Small ribosomal subunit protein bS20 of Enterobacter sp. (strain 638).